The chain runs to 213 residues: Orotate phosphoribosyltransferase (213 aa).

K26 is a binding site for 5-phospho-alpha-D-ribose 1-diphosphate. 34–35 (FF) is a binding site for orotate. Residues 72-73 (YK), R99, K100, K103, H105, and 124-132 (DDVITAGTA) each bind 5-phospho-alpha-D-ribose 1-diphosphate. Residues T128 and R156 each coordinate orotate.

Belongs to the purine/pyrimidine phosphoribosyltransferase family. PyrE subfamily. As to quaternary structure, homodimer. Mg(2+) is required as a cofactor.

The enzyme catalyses orotidine 5'-phosphate + diphosphate = orotate + 5-phospho-alpha-D-ribose 1-diphosphate. The protein operates within pyrimidine metabolism; UMP biosynthesis via de novo pathway; UMP from orotate: step 1/2. Catalyzes the transfer of a ribosyl phosphate group from 5-phosphoribose 1-diphosphate to orotate, leading to the formation of orotidine monophosphate (OMP). The sequence is that of Orotate phosphoribosyltransferase from Haemophilus influenzae (strain ATCC 51907 / DSM 11121 / KW20 / Rd).